Reading from the N-terminus, the 1210-residue chain is Adenine-specific methyltransferase PglX (1210 aa).

Basic and acidic residues predominate over residues 1181 to 1194 (KQGEHGLTDDDLRG). The interval 1181–1210 (KQGEHGLTDDDLRGWRPPAATRRRRAAAKQ) is disordered. Residues 1201-1210 (TRRRRAAAKQ) are compositionally biased toward basic residues.

The protein belongs to the methyltransferase superfamily. PglX adenine methyltransferase family.

It carries out the reaction a 2'-deoxyadenosine in DNA + S-adenosyl-L-methionine = an N(6)-methyl-2'-deoxyadenosine in DNA + S-adenosyl-L-homocysteine + H(+). In terms of biological role, BREX systems (bacteriophage exclusion) provide immunity against bacteriophage. Part of a type 2 BREX system. Probably a DNA methyltransferase, it methylates phage DNA in vitro in an S-adenosyl-L-methionine-dependent manner. Previously called the phage growth limitation (Pgl) system, it confers protection against bacteriophage phiC31. The bacteria allows one cycle of phage infection, but subsequent cycles are impaired, protecting the original bacterial colony. The system undergoes high rates (10(-3) to 10(-4)) of phase reversion, i.e. loss and regain of phiC31 resistance. When the pglW-pglX-pglY-pglZ genes are transformed into a susceptible S.lividans (strain 1326) they confer resistance to infection by phage phiC31 and phiBT1; all 4 genes are necessary. Probably a toxic component of a type II toxin-antitoxin (TA) system. The toxic activity is inhibited by its cognate antitoxin PglZ. Its function is as follows. May be a subtypes G and alpha restriction enzyme that recognizes and cleaves an unknown sequence. Methylates an adenine residue in the same sequence. This Streptomyces coelicolor (strain ATCC BAA-471 / A3(2) / M145) protein is Adenine-specific methyltransferase PglX.